The sequence spans 249 residues: Flavin-dependent thymidylate synthase (249 aa).

Residues V8–S225 enclose the ThyX domain. Residues S62, R86–R88, and Q94 each bind FAD. DUMP-binding positions include Q83–R86, Q94–R98, and R164. Positions R86–S96 match the ThyX motif motif. FAD contacts are provided by residues N180 to R182 and N186. R191 provides a ligand contact to dUMP. Residue R191 is the Involved in ionization of N3 of dUMP, leading to its activation of the active site.

Belongs to the thymidylate synthase ThyX family. Homotetramer. The cofactor is FAD.

The catalysed reaction is dUMP + (6R)-5,10-methylene-5,6,7,8-tetrahydrofolate + NADPH + H(+) = dTMP + (6S)-5,6,7,8-tetrahydrofolate + NADP(+). It functions in the pathway pyrimidine metabolism; dTTP biosynthesis. Functionally, catalyzes the reductive methylation of 2'-deoxyuridine-5'-monophosphate (dUMP) to 2'-deoxythymidine-5'-monophosphate (dTMP) while utilizing 5,10-methylenetetrahydrofolate (mTHF) as the methyl donor, and NADPH and FADH(2) as the reductant. The protein is Flavin-dependent thymidylate synthase of Clostridium tetani (strain Massachusetts / E88).